Here is a 274-residue protein sequence, read N- to C-terminus: Enoyl-CoA isomerase/hydratase fer4 (274 aa).

Substrate is bound by residues 77 to 81 (AGADL) and Gly-124. The stretch at 79–109 (ADLKERREMSEAEVIEFLQDLRHMLEQVEKL) forms a coiled coil.

It belongs to the enoyl-CoA hydratase/isomerase family.

The enzyme catalyses a (3S)-3-hydroxyacyl-CoA = a (2E)-enoyl-CoA + H2O. It catalyses the reaction a 4-saturated-(3S)-3-hydroxyacyl-CoA = a (3E)-enoyl-CoA + H2O. Its pathway is siderophore biosynthesis. Functionally, enoyl-CoA isomerase/hydratase; part of the gene cluster that mediates the biosynthesis of siderophore ferrichrome A which is contributing to organismal virulence. The first step of ferrichrome A biosynthesis is performed by the HMG-CoA synthase hcs1 which catalyzes the generation of HMG-CoA and CoA using acetoacetyl-CoA and acetyl-CoA as substrates. The enoyl-CoA isomerase/hydratase fer4 then catalyzes the conversion of hcs1-produced HMG-CoA to methylglutaconyl-CoA. The acyltransferase fer5 then fuses the fer4-generated methylglutaconyl-CoA with sid1-generated hydroxyornithine to yield methylglutaconyl hydroxyornithine. Methylglutaconyl hydroxyornithine is then available for use by the NRPS fer3 to generate ferrichrome A. The chain is Enoyl-CoA isomerase/hydratase fer4 from Mycosarcoma maydis (Corn smut fungus).